A 50-amino-acid chain; its full sequence is Protein hunchback (50 aa).

C2H2-type zinc fingers lie at residues 1 to 5 (HILKH), 11 to 33 (IRCP…MKSH), and 39 to 50 (YRCLDCNYATKY).

Belongs to the hunchback C2H2-type zinc-finger protein family.

It is found in the nucleus. Gap class segmentation protein that controls development of head structures. This Bradysia coprophila (Dark-winged fungus gnat) protein is Protein hunchback (hb).